Reading from the N-terminus, the 265-residue chain is 6-oxopurine nucleoside phosphorylase (265 aa).

Residues serine 10, 49–50, and 82–83 contribute to the phosphate site; these read RH and SA. 2 disulfide bridges follow: cysteine 136–cysteine 202 and cysteine 162–cysteine 190. Residue methionine 187 participates in substrate binding. Threonine 188 serves as a coordination point for phosphate. Residue 211–213 participates in substrate binding; the sequence is NYA. Residues cysteine 254 and cysteine 256 are joined by a disulfide bond.

The protein belongs to the PNP/MTAP phosphorylase family. MTAP subfamily. Homohexamer. Dimer of a homotrimer.

The catalysed reaction is a purine D-ribonucleoside + phosphate = a purine nucleobase + alpha-D-ribose 1-phosphate. It carries out the reaction guanosine + phosphate = alpha-D-ribose 1-phosphate + guanine. It catalyses the reaction inosine + phosphate = alpha-D-ribose 1-phosphate + hypoxanthine. It functions in the pathway purine metabolism; purine nucleoside salvage. Functionally, purine nucleoside phosphorylase which is highly specific for 6-oxopurine nucleosides. Cleaves guanosine or inosine to respective bases and sugar-1-phosphate molecules. Involved in purine salvage. This is 6-oxopurine nucleoside phosphorylase from Pyrococcus furiosus (strain ATCC 43587 / DSM 3638 / JCM 8422 / Vc1).